We begin with the raw amino-acid sequence, 509 residues long: T-complex protein 11-like protein 1 (509 aa).

Positions 1–12 (MSENLDKSHVDE) are enriched in basic and acidic residues. The segment at 1-57 (MSENLDKSHVDEAGEAEAAASEQGLEGALECSDETLQKKVKSDSPSSQRVGRPHSSP) is disordered. The span at 16-30 (AEAAASEQGLEGALE) shows a compositional bias: low complexity. The residue at position 56 (serine 56) is a Phosphoserine.

The protein belongs to the TCP11 family.

In Mus musculus (Mouse), this protein is T-complex protein 11-like protein 1 (Tcp11l1).